Reading from the N-terminus, the 685-residue chain is Mesothelin-like protein (685 aa).

The first 32 residues, 1 to 32, serve as a signal peptide directing secretion; it reads MSRTLRPSAMGSRVGALASPGLALLLSLTAHC. At 33–627 the chain is on the extracellular side; the sequence is SGPQAKGLPK…GVSHTSGSPP (595 aa). N-linked (GlcNAc...) asparagine glycans are attached at residues N315 and N400. Residues 603-624 form a disordered region; it reads PPSSLIHSLDPPGNDGVSHTSG. A helical membrane pass occupies residues 628 to 648; it reads VHLGYLSLAVALPSSLLWLLL. Residues 649 to 685 lie on the Cytoplasmic side of the membrane; it reads CQLPSGQMATAHRTLGPMALAQGSWTPEHQIPEKRSC.

The protein belongs to the mesothelin family.

Its subcellular location is the membrane. Its function is as follows. May play a role in cellular adhesion. This Mus musculus (Mouse) protein is Mesothelin-like protein (Mslnl).